The primary structure comprises 546 residues: CTP synthase (546 aa).

The amidoligase domain stretch occupies residues 1–267 (MTKFIFVTGG…AEQVLDILQL (267 aa)). Position 13 (S13) interacts with CTP. S13 is a UTP binding site. 14 to 19 (SIGKGI) serves as a coordination point for ATP. Y54 provides a ligand contact to L-glutamine. Residue D71 participates in ATP binding. Residues D71 and E141 each contribute to the Mg(2+) site. Residues 148–150 (DIE), 188–193 (KTKPTQ), and K224 contribute to the CTP site. UTP is bound by residues 188–193 (KTKPTQ) and K224. Positions 292-534 (EVAIVGKYVR…IKAALGSDLT (243 aa)) constitute a Glutamine amidotransferase type-1 domain. Position 354 (G354) interacts with L-glutamine. The active-site Nucleophile; for glutamine hydrolysis is C381. L-glutamine-binding positions include 382-385 (LGMQ), E405, and R462. Catalysis depends on residues H507 and E509.

It belongs to the CTP synthase family. Homotetramer.

The catalysed reaction is UTP + L-glutamine + ATP + H2O = CTP + L-glutamate + ADP + phosphate + 2 H(+). It carries out the reaction L-glutamine + H2O = L-glutamate + NH4(+). It catalyses the reaction UTP + NH4(+) + ATP = CTP + ADP + phosphate + 2 H(+). It functions in the pathway pyrimidine metabolism; CTP biosynthesis via de novo pathway; CTP from UDP: step 2/2. With respect to regulation, allosterically activated by GTP, when glutamine is the substrate; GTP has no effect on the reaction when ammonia is the substrate. The allosteric effector GTP functions by stabilizing the protein conformation that binds the tetrahedral intermediate(s) formed during glutamine hydrolysis. Inhibited by the product CTP, via allosteric rather than competitive inhibition. In terms of biological role, catalyzes the ATP-dependent amination of UTP to CTP with either L-glutamine or ammonia as the source of nitrogen. Regulates intracellular CTP levels through interactions with the four ribonucleotide triphosphates. This chain is CTP synthase, found in Synechococcus sp. (strain ATCC 27144 / PCC 6301 / SAUG 1402/1) (Anacystis nidulans).